Reading from the N-terminus, the 398-residue chain is Succinate--CoA ligase [ADP-forming] subunit beta (398 aa).

The 246-residue stretch at 9–254 (KAVLREFGVP…ESEEDAKEIE (246 aa)) folds into the ATP-grasp domain. ATP contacts are provided by residues Lys-46, 53 to 55 (GRG), Glu-109, Ser-112, and Glu-117. Mg(2+)-binding residues include Asn-209 and Asp-223. Substrate-binding positions include Asn-274 and 331–333 (GIM).

It belongs to the succinate/malate CoA ligase beta subunit family. Heterotetramer of two alpha and two beta subunits. Mg(2+) is required as a cofactor.

It carries out the reaction succinate + ATP + CoA = succinyl-CoA + ADP + phosphate. The catalysed reaction is GTP + succinate + CoA = succinyl-CoA + GDP + phosphate. The protein operates within carbohydrate metabolism; tricarboxylic acid cycle; succinate from succinyl-CoA (ligase route): step 1/1. In terms of biological role, succinyl-CoA synthetase functions in the citric acid cycle (TCA), coupling the hydrolysis of succinyl-CoA to the synthesis of either ATP or GTP and thus represents the only step of substrate-level phosphorylation in the TCA. The beta subunit provides nucleotide specificity of the enzyme and binds the substrate succinate, while the binding sites for coenzyme A and phosphate are found in the alpha subunit. In Rhodopseudomonas palustris (strain HaA2), this protein is Succinate--CoA ligase [ADP-forming] subunit beta.